The following is a 110-amino-acid chain: PCNA-associated factor (110 aa).

Residue Lys15 forms a Glycyl lysine isopeptide (Lys-Gly) (interchain with G-Cter in ubiquitin) linkage. The D-box signature appears at 23-34; that stretch reads RKVLGSSTFVTN. Position 24 is an N6-acetyllysine; alternate (Lys24). Lys24 is covalently cross-linked (Glycyl lysine isopeptide (Lys-Gly) (interchain with G-Cter in ubiquitin); alternate). Phosphoserine occurs at positions 28 and 71. Over residues 28-39 the composition is skewed to low complexity; that stretch reads SSTFVTNSSSSS. The segment at 28–110 is disordered; sequence SSTFVTNSSS…QPDHRDDENE (83 aa). Residues 61 to 71 carry the PIP-box motif; sequence QKGIGEFFRLS. Over residues 71–80 the composition is skewed to basic and acidic residues; the sequence is SPKESKKENQ. Residues 77–79 carry the KEN box motif; that stretch reads KEN. Residues 84-96 carry the Initiation motif motif; sequence EAGTSGLGKAKRK.

Interacts (when monoubiquitinated at Lys-15 and Lys-24) with PCNA. Interacts with isoform 2/p33ING1b of ING1. Interacts with BRCA1. In terms of processing, monoubiquitinated at Lys-15 and Lys-24 during normal S phase, promoting its association with PCNA. Also diubiquitinated at these 2 sites. Following DNA damage, monoubiquitin chains at Lys-15 and Lys-24 are probably extended, leading to disrupt the interaction with PCNA. Polyubiquitinated by the APC/C complex at the mitotic exit, leading to its degradation by the proteasome.

It is found in the nucleus. The protein localises to the cytoplasm. Its subcellular location is the perinuclear region. Functionally, PCNA-binding protein that acts as a regulator of DNA repair during DNA replication. Following DNA damage, the interaction with PCNA is disrupted, facilitating the interaction between monoubiquitinated PCNA and the translesion DNA synthesis DNA polymerase eta (POLH) at stalled replisomes, facilitating the bypass of replication-fork-blocking lesions. Also acts as a regulator of centrosome number. This Mus musculus (Mouse) protein is PCNA-associated factor.